We begin with the raw amino-acid sequence, 90 residues long: Small ribosomal subunit protein uS15 (90 aa).

This sequence belongs to the universal ribosomal protein uS15 family. Part of the 30S ribosomal subunit. Forms a bridge to the 50S subunit in the 70S ribosome, contacting the 23S rRNA.

One of the primary rRNA binding proteins, it binds directly to 16S rRNA where it helps nucleate assembly of the platform of the 30S subunit by binding and bridging several RNA helices of the 16S rRNA. Its function is as follows. Forms an intersubunit bridge (bridge B4) with the 23S rRNA of the 50S subunit in the ribosome. This chain is Small ribosomal subunit protein uS15, found in Blochmanniella floridana.